Here is a 384-residue protein sequence, read N- to C-terminus: MAKHLFTSESVSEGHPDKIADQISDAVLDAILQQDPKARVACETYVKTGMVLVGGEITTSAWVDIEEITRNTVREIGYVHSDMGFDANSCAVLSAIGKQSPDINQGVDRADPLEQGAGDQGLMFGYATNETDVLMPAPITYAHRLVQRQAEVRKNGTLPWLRPDAKSQVTFQYDDGKIVGIDAVVLSTQHAEDIDQKSLQEAVMEEIIKPILPSEWLNTSTKFFINPTGRFVIGGPMGDCGLTGRKIIVDTYGGMARHGGGAFSGKDPSKVDRSAAYAARYVAKNIVAAGLADRCEIQVSYAIGVAEPTSIMVETFGTEKVPAEQLILLVREFFDLRPYGLIQMLDLLHPIYKETAAYGHFGRENFPWEKTDKAQLLRDAAGLK.

His15 serves as a coordination point for ATP. Residue Asp17 participates in Mg(2+) binding. Glu43 provides a ligand contact to K(+). Glu56 and Gln99 together coordinate L-methionine. The segment at 99-109 (QSPDINQGVDR) is flexible loop. Residues 164-166 (DAK), 230-231 (RF), Asp239, 245-246 (RK), Ala262, and Lys266 each bind ATP. L-methionine is bound at residue Asp239. L-methionine is bound at residue Lys270.

Belongs to the AdoMet synthase family. Homotetramer; dimer of dimers. Mg(2+) serves as cofactor. Requires K(+) as cofactor.

It is found in the cytoplasm. The catalysed reaction is L-methionine + ATP + H2O = S-adenosyl-L-methionine + phosphate + diphosphate. The protein operates within amino-acid biosynthesis; S-adenosyl-L-methionine biosynthesis; S-adenosyl-L-methionine from L-methionine: step 1/1. Functionally, catalyzes the formation of S-adenosylmethionine (AdoMet) from methionine and ATP. The overall synthetic reaction is composed of two sequential steps, AdoMet formation and the subsequent tripolyphosphate hydrolysis which occurs prior to release of AdoMet from the enzyme. The chain is S-adenosylmethionine synthase from Salmonella choleraesuis (strain SC-B67).